Here is a 343-residue protein sequence, read N- to C-terminus: Aspartate carbamoyltransferase catalytic subunit (343 aa).

Carbamoyl phosphate-binding residues include arginine 91 and threonine 92. Position 119 (lysine 119) interacts with L-aspartate. Residues arginine 141, histidine 171, and glutamine 174 each coordinate carbamoyl phosphate. 2 residues coordinate L-aspartate: arginine 204 and arginine 259. Carbamoyl phosphate is bound by residues glycine 300 and proline 301.

The protein belongs to the aspartate/ornithine carbamoyltransferase superfamily. ATCase family. In terms of assembly, heterododecamer (2C3:3R2) of six catalytic PyrB chains organized as two trimers (C3), and six regulatory PyrI chains organized as three dimers (R2).

The catalysed reaction is carbamoyl phosphate + L-aspartate = N-carbamoyl-L-aspartate + phosphate + H(+). The protein operates within pyrimidine metabolism; UMP biosynthesis via de novo pathway; (S)-dihydroorotate from bicarbonate: step 2/3. Catalyzes the condensation of carbamoyl phosphate and aspartate to form carbamoyl aspartate and inorganic phosphate, the committed step in the de novo pyrimidine nucleotide biosynthesis pathway. This Burkholderia cenocepacia (strain HI2424) protein is Aspartate carbamoyltransferase catalytic subunit.